A 217-amino-acid chain; its full sequence is L-lactate dehydrogenase B chain (217 aa).

NAD(+) is bound at residue asparagine 22. 2 residues coordinate substrate: asparagine 22 and arginine 53. The active-site Proton acceptor is the histidine 77. A Phosphotyrosine modification is found at tyrosine 123. Threonine 132 contributes to the substrate binding site. Lysine 212 carries the N6-acetyllysine modification.

The protein belongs to the LDH/MDH superfamily. LDH family. In terms of assembly, homotetramer. Interacts with PTEN upstream reading frame protein MP31; the interaction leads to inhibition of mitochondrial lactate dehydrogenase activity, preventing conversion of lactate to pyruvate in mitochondria.

The protein resides in the cytoplasm. The protein localises to the mitochondrion inner membrane. It catalyses the reaction (S)-lactate + NAD(+) = pyruvate + NADH + H(+). Its pathway is fermentation; pyruvate fermentation to lactate; (S)-lactate from pyruvate: step 1/1. Interconverts simultaneously and stereospecifically pyruvate and lactate with concomitant interconversion of NADH and NAD(+). The sequence is that of L-lactate dehydrogenase B chain (LDHB) from Oryctolagus cuniculus (Rabbit).